We begin with the raw amino-acid sequence, 527 residues long: Cytochrome P450 monooxygenase olcJ (527 aa).

The helical transmembrane segment at 21–43 (GLLTRYNVFMAISITVTALYLIH) threads the bilayer. Residue cysteine 464 coordinates heme.

It belongs to the cytochrome P450 family. The cofactor is heme.

The protein localises to the membrane. It functions in the pathway secondary metabolite biosynthesis; terpenoid biosynthesis. Its function is as follows. Cytochrome P450 monooxygenase; part of the gene cluster that mediates the biosynthesis of 15-deoxyoxalicine B. The first step of the pathway is the synthesis of nicotinyl-CoA from nicotinic acid by the nicotinic acid-CoA ligase olcI. Nicotinyl-CoA is then a substrate of polyketide synthase olcA to produce 4-hydroxy-6-(3-pyridinyl)-2H-pyran-2-one (HPPO) which is further prenylated by the polyprenyl transferase olcH to yield geranylgeranyl-HPPO. Geranylgeranyl pyrophosphate is provided by the cluster-specific geranylgeranyl pyrophosphate synthase olcC. The FAD-dependent monooxygenase olcE catalyzes the epoxidation of geranylgeranyl-HPPO and the terpene cyclase olcD catalyzes the cyclization of the terpenoid component, resulting in the formation of the tricyclic terpene moiety seen in predecaturin E. The cytochrome P450 monooxygenase then catalyzes the allylic oxidation of predecaturin E, which is followed by spirocylization with concomitant loss of one molecule of water to form decaturin E. Decaturin E is the substrate of the cytochrome P450 monooxygenase olcJ which hydroxylates it at the C-29 position to form decaturin F. The short-chain dehydrogenase/reductase olcF may catalyze the oxidation of decaturin F to generate the 29-hydroxyl-27-one intermediate, and subsequent hemiacetal formation probably leads to the formation of decaturin C. The dioxygenase olcK may be a peroxisomal enzyme that catalyzes the hydroxylation of decaturin C into decaturin A once decaturin C is shuttled into the peroxisome by the MFS transporter olcL. Finally the cytochrome P450 monooxygenase olcB catalyzes the oxidative rearrangement to yield 15-deoxyoxalicine B. In the absence of olcJ, decaturin E may be shunted to a pathway in which it is oxidized to a ketone, possibly by olcF, to form decaturin D, which undergoes further allylic oxidation to yield decaturin G. Moreover, in the absence of oclK or oclL, oclB can convert decaturin C into 15-deoxyoxalicine A. In Penicillium canescens, this protein is Cytochrome P450 monooxygenase olcJ.